Consider the following 114-residue polypeptide: MRVKKGFKARRRRNRVLKLAKGFRGRRKNCYRRANQAVERALNYSTRDRRLKRREFRALWIVRINAAARQNGTTYSKLVAALRKAGIEIDRKILADLALALPGDFAAIVKTAQA.

Belongs to the bacterial ribosomal protein bL20 family.

Its function is as follows. Binds directly to 23S ribosomal RNA and is necessary for the in vitro assembly process of the 50S ribosomal subunit. It is not involved in the protein synthesizing functions of that subunit. The sequence is that of Large ribosomal subunit protein bL20 from Anaeromyxobacter dehalogenans (strain 2CP-1 / ATCC BAA-258).